The primary structure comprises 443 residues: Zinc finger protein ZIC 1 (443 aa).

The segment at 221 to 256 (LICKWIEPEQLANPKKSCNKTFSTMHELVTHVTVEH) adopts a C2H2-type 1; atypical zinc-finger fold. A C2H2-type 2; atypical zinc finger spans residues 265 to 292 (HICVWEECPREGKPFKAKYKLINHIRVH). C2H2-type zinc fingers lie at residues 298-322 (FPCP…KRTH), 328-352 (FKCE…MHVH), and 358-380 (YLCK…MKVH). The interval 371-433 (SSLRKHMKVH…AVHHTSNHST (63 aa)) is disordered. Low complexity predominate over residues 383–396 (SSQGSQPSPAASSG). The span at 397–413 (YESSTPPTIVSPSAENQ) shows a compositional bias: polar residues. The segment at 408-443 (PSAENQSTSSLSPSSSAVHHTSNHSTLSSNFNEWYV) is negatively regulates transcriptional activity. Positions 414-433 (STSSLSPSSSAVHHTSNHST) are enriched in low complexity.

It belongs to the GLI C2H2-type zinc-finger protein family. In terms of tissue distribution, during early gastrula stages, widely expressed in the dorsal ectoderm. At mid-gastrula, expressed throughout the presumptive neural plate and at late gastrula, expression gradually diminishes in the dorsal midline and increases in the anterior folds. By early neurula stage, expression becomes restricted to the lateral edges of the neural plate, corresponding to the presumptive dorsal neural plate and neural crest, and in flanking ectoderm. In early tailbud stages (stages 22-23), expressed in the dorsal forebrain, midbrain and hindbrain. Subsequently expressed in the telencephalon and at the diencephalon/mesencephalon boundary. In the spinal cord, expression is restricted to the dorsal most region including the roof plate. Also expressed in the somites but not in eye vesicles. At larval stages, expressed mainly in the dorsal neural tube throughout its anteroposterior axis.

The protein localises to the nucleus. It is found in the cytoplasm. In terms of biological role, transcriptional activator that induces expression of multiple genes including pax3, en2, snai2/slug, feb and a subset of wnt genes. Has multiple key roles in the regulation of neural induction and neurogenesis: acts as a neural competence factor, sensitizing the presumptive neuroectoderm to respond to subsequent neuralizing signals. Promotes both preplacodal cell fates and neural crest cell fates, two of the cell populations that arise from the neural plate border. Cooperates with pax3 in concert with wnt signaling to determine neural crest fate. Synergizes with the bmp-inhibitor noggin/nog and acts through the wnt pathway to induce expression of en2. May bind to the minimal GLI-consensus sequence 5'-TGGGTGGTC-3'. The sequence is that of Zinc finger protein ZIC 1 (zic1) from Xenopus laevis (African clawed frog).